An 80-amino-acid polypeptide reads, in one-letter code: Toxin Acra I-3 (80 aa).

The signal sequence occupies residues 1–22; the sequence is MMKLVLLSVIVILFSLIGSIHG. An LCN-type CS-alpha/beta domain is found at 25–80; that stretch reads VPGNYPLDSSGNKYPCTVLGDNQSCIDVCKKHGVKYGYCYGFKCWCEYLKDKNVSL. 3 cysteine pairs are disulfide-bonded: Cys-40/Cys-63, Cys-49/Cys-68, and Cys-53/Cys-70.

The protein belongs to the long (3 C-C) scorpion toxin superfamily. Sodium/Potassium channel inhibitor family. In terms of tissue distribution, expressed by the venom gland.

The protein resides in the secreted. Its function is as follows. Probable neurotoxin that inhibits ion channels. Is toxic to mice. The sequence is that of Toxin Acra I-3 from Androctonus crassicauda (Arabian fat-tailed scorpion).